Here is a 277-residue protein sequence, read N- to C-terminus: S-formylglutathione hydrolase FrmB (277 aa).

Active-site charge relay system residues include S145, D221, and H254.

The protein belongs to the esterase D family.

The enzyme catalyses S-formylglutathione + H2O = formate + glutathione + H(+). In terms of biological role, serine hydrolase involved in the detoxification of formaldehyde. Hydrolyzes S-formylglutathione to glutathione and formate. This is S-formylglutathione hydrolase FrmB (frmB) from Escherichia coli (strain SMS-3-5 / SECEC).